A 584-amino-acid chain; its full sequence is Aspartate--tRNA(Asp/Asn) ligase (584 aa).

Glu177 is an L-aspartate binding site. An aspartate region spans residues 201-204 (QLFK). Residue Arg223 participates in L-aspartate binding. ATP contacts are provided by residues 223 to 225 (RDE) and Gln232. His447 contributes to the L-aspartate binding site. Glu481 serves as a coordination point for ATP. An L-aspartate-binding site is contributed by Arg488. 533–536 (GLDR) contacts ATP.

It belongs to the class-II aminoacyl-tRNA synthetase family. Type 1 subfamily. In terms of assembly, homodimer.

Its subcellular location is the cytoplasm. It carries out the reaction tRNA(Asx) + L-aspartate + ATP = L-aspartyl-tRNA(Asx) + AMP + diphosphate. In terms of biological role, aspartyl-tRNA synthetase with relaxed tRNA specificity since it is able to aspartylate not only its cognate tRNA(Asp) but also tRNA(Asn). Reaction proceeds in two steps: L-aspartate is first activated by ATP to form Asp-AMP and then transferred to the acceptor end of tRNA(Asp/Asn). The chain is Aspartate--tRNA(Asp/Asn) ligase from Chlamydia pneumoniae (Chlamydophila pneumoniae).